The sequence spans 255 residues: Ribonuclease HII (255 aa).

One can recognise an RNase H type-2 domain in the interval Glu-70–Lys-255. Positions 76, 77, and 168 each coordinate a divalent metal cation.

The protein belongs to the RNase HII family. Requires Mn(2+) as cofactor. Mg(2+) serves as cofactor.

It is found in the cytoplasm. It catalyses the reaction Endonucleolytic cleavage to 5'-phosphomonoester.. Its function is as follows. Endonuclease that specifically degrades the RNA of RNA-DNA hybrids. The protein is Ribonuclease HII of Streptococcus thermophilus (strain ATCC BAA-491 / LMD-9).